The primary structure comprises 364 residues: Peptide chain release factor 1 (364 aa).

At Gln-238 the chain carries N5-methylglutamine. The span at 286 to 297 shows a compositional bias: basic and acidic residues; sequence DEKRQAEEDSTR. Residues 286–315 form a disordered region; it reads DEKRQAEEDSTRRNLVGSGDRSERIRTYNY.

Belongs to the prokaryotic/mitochondrial release factor family. Post-translationally, methylated by PrmC. Methylation increases the termination efficiency of RF1.

Its subcellular location is the cytoplasm. Peptide chain release factor 1 directs the termination of translation in response to the peptide chain termination codons UAG and UAA. The chain is Peptide chain release factor 1 from Idiomarina loihiensis (strain ATCC BAA-735 / DSM 15497 / L2-TR).